Reading from the N-terminus, the 433-residue chain is 23S rRNA (uracil(1939)-C(5))-methyltransferase RlmD (433 aa).

The TRAM domain maps to 10 to 68 (RTTTRQIITVSVNDLDSFGQGVARHNGKTLFIPGLLPQENAEVTVTEDKKQYARAKVVR). [4Fe-4S] cluster contacts are provided by Cys-81, Cys-87, Cys-90, and Cys-162. S-adenosyl-L-methionine contacts are provided by Gln-265, Phe-294, Asn-299, Glu-315, Asn-342, and Asp-363. Cys-389 serves as the catalytic Nucleophile.

It belongs to the class I-like SAM-binding methyltransferase superfamily. RNA M5U methyltransferase family. RlmD subfamily.

It carries out the reaction uridine(1939) in 23S rRNA + S-adenosyl-L-methionine = 5-methyluridine(1939) in 23S rRNA + S-adenosyl-L-homocysteine + H(+). Catalyzes the formation of 5-methyl-uridine at position 1939 (m5U1939) in 23S rRNA. The sequence is that of 23S rRNA (uracil(1939)-C(5))-methyltransferase RlmD from Shigella sonnei (strain Ss046).